A 311-amino-acid polypeptide reads, in one-letter code: MADVMNVGVNLEAFSQAINAIQALRSSVTRVFDFLKDGMKNKETLESREKVFITEFQENLQSVNRDLNELERLSTLVGRPSESHPLHNSGLLSLDPVQDKTPLYSQLLQAYKWSNKLQYHAGLASSLLNQQSLKRSANQMGTSAKRRPKVQPSTLALPTQYVDDVISRIGRMFPDMSIELFRPNGTSAVLLVTLGKVLKAIVVMRSLFIDRTIVRGFHENIYTEDRKLDIWSKSNYQAFQKVTDHATTALLHYQLPQMPDVVVRSFMTWLRSYIKLFQTPCQRCGKYLQEGLPPTWRDFRTLEAFHDTCRQ.

This sequence belongs to the Mediator complex subunit 27 family. In terms of assembly, component of the Mediator complex.

The protein resides in the nucleus. Functionally, component of the Mediator complex, a coactivator involved in the regulated transcription of nearly all RNA polymerase II-dependent genes. Mediator functions as a bridge to convey information from gene-specific regulatory proteins to the basal RNA polymerase II transcription machinery. Mediator is recruited to promoters by direct interactions with regulatory proteins and serves as a scaffold for the assembly of a functional preinitiation complex with RNA polymerase II and the general transcription factors. Required for the development of dopaminergic amacrine cells in the retina. May also negatively regulate the development of rod photoreceptor cells. The protein is Mediator of RNA polymerase II transcription subunit 27 (med27) of Danio rerio (Zebrafish).